The following is a 522-amino-acid chain: Glucans biosynthesis protein G (522 aa).

The first 33 residues, 1–33 (MPNNKFFVKSSKASLRWLGATVLLTLYALPSWA), serve as a signal peptide directing secretion.

This sequence belongs to the OpgD/OpgG family.

It is found in the periplasm. It participates in glycan metabolism; osmoregulated periplasmic glucan (OPG) biosynthesis. Functionally, involved in the biosynthesis of osmoregulated periplasmic glucans (OPGs). In Sodalis glossinidius (strain morsitans), this protein is Glucans biosynthesis protein G.